The primary structure comprises 544 residues: Chaperonin GroEL 1 (544 aa).

Residues 30–33, Lys-51, 87–91, Gly-415, 479–481, and Asp-495 contribute to the ATP site; these read TLGP, DGTTT, and NAA.

It belongs to the chaperonin (HSP60) family. Forms a cylinder of 14 subunits composed of two heptameric rings stacked back-to-back. Interacts with the co-chaperonin GroES.

The protein resides in the cytoplasm. It catalyses the reaction ATP + H2O + a folded polypeptide = ADP + phosphate + an unfolded polypeptide.. Together with its co-chaperonin GroES, plays an essential role in assisting protein folding. The GroEL-GroES system forms a nano-cage that allows encapsulation of the non-native substrate proteins and provides a physical environment optimized to promote and accelerate protein folding. This Vibrio cholerae serotype O1 (strain ATCC 39315 / El Tor Inaba N16961) protein is Chaperonin GroEL 1.